A 501-amino-acid chain; its full sequence is Pyruvate kinase (501 aa).

Residue Arg-50 coordinates substrate. Residues Asn-52, Ser-54, Asp-85, and Thr-86 each contribute to the K(+) site. 52–55 lines the ATP pocket; that stretch reads NFSH. ATP contacts are provided by Arg-92 and Lys-178. Glu-243 contributes to the Mg(2+) binding site. Substrate contacts are provided by Gly-266, Asp-267, and Thr-299. Asp-267 serves as a coordination point for Mg(2+).

The protein belongs to the pyruvate kinase family. In terms of assembly, homotetramer. The cofactor is Mg(2+). It depends on K(+) as a cofactor.

The enzyme catalyses pyruvate + ATP = phosphoenolpyruvate + ADP + H(+). It participates in carbohydrate degradation; glycolysis; pyruvate from D-glyceraldehyde 3-phosphate: step 5/5. The polypeptide is Pyruvate kinase (PYK1) (Naumovozyma castellii (Yeast)).